The following is a 49-amino-acid chain: Large ribosomal subunit protein bL33 (49 aa).

The protein belongs to the bacterial ribosomal protein bL33 family.

In Caldanaerobacter subterraneus subsp. tengcongensis (strain DSM 15242 / JCM 11007 / NBRC 100824 / MB4) (Thermoanaerobacter tengcongensis), this protein is Large ribosomal subunit protein bL33.